The primary structure comprises 393 residues: UDP-glucose 6-dehydrogenase (393 aa).

NAD(+) contacts are provided by Val-11, Asp-31, Lys-36, Thr-85, Thr-120, and Glu-147. Substrate contacts are provided by residues 143-147 (EFLRE), Lys-199, Asn-203, 244-248 (YNNPS), and Gly-252. Residue Tyr-254 participates in NAD(+) binding. Cys-255 (nucleophile) is an active-site residue. Residue Lys-258 coordinates NAD(+). Lys-309 contacts substrate. An NAD(+)-binding site is contributed by Arg-316.

Belongs to the UDP-glucose/GDP-mannose dehydrogenase family. In terms of assembly, homodimer.

The enzyme catalyses UDP-alpha-D-glucose + 2 NAD(+) + H2O = UDP-alpha-D-glucuronate + 2 NADH + 3 H(+). It participates in nucleotide-sugar biosynthesis; UDP-alpha-D-glucuronate biosynthesis; UDP-alpha-D-glucuronate from UDP-alpha-D-glucose: step 1/1. The protein operates within capsule biogenesis; capsule polysaccharide biosynthesis. Catalyzes the formation of UDP-glucuronic acid which is required for capsular polysaccharide synthesis. Does not catalyze the formation of glucuronamide moiety of the capsular polysaccharide. The chain is UDP-glucose 6-dehydrogenase from Campylobacter jejuni subsp. jejuni serotype O:2 (strain ATCC 700819 / NCTC 11168).